The primary structure comprises 123 residues: uncharacterized protein (123 aa).

A helical membrane pass occupies residues 14–34 (VVLKITAVVCSVFSIRVLILA).

The protein resides in the membrane. This is an uncharacterized protein from Saccharomyces cerevisiae (strain ATCC 204508 / S288c) (Baker's yeast).